Consider the following 352-residue polypeptide: tRNA (guanine(26)-N(2))-dimethyltransferase (352 aa).

The Trm1 methyltransferase domain maps to 4 to 350 (ILNKEGAVEF…ANYDEIARIL (347 aa)). 5 residues coordinate S-adenosyl-L-methionine: arginine 39, arginine 65, aspartate 83, aspartate 109, and alanine 110.

This sequence belongs to the class I-like SAM-binding methyltransferase superfamily. Trm1 family.

The enzyme catalyses guanosine(26) in tRNA + 2 S-adenosyl-L-methionine = N(2)-dimethylguanosine(26) in tRNA + 2 S-adenosyl-L-homocysteine + 2 H(+). Dimethylates a single guanine residue at position 26 of a number of tRNAs using S-adenosyl-L-methionine as donor of the methyl groups. In Pyrobaculum islandicum (strain DSM 4184 / JCM 9189 / GEO3), this protein is tRNA (guanine(26)-N(2))-dimethyltransferase.